Consider the following 64-residue polypeptide: SPbeta prophage-derived uncharacterized protein YopV (64 aa).

The sequence is that of SPbeta prophage-derived uncharacterized protein YopV (yopV) from Bacillus subtilis (strain 168).